We begin with the raw amino-acid sequence, 365 residues long: WAT1-related protein At4g01440 (365 aa).

Transmembrane regions (helical) follow at residues 8-28 (WTPV…NALV), 40-60 (VIAT…AFFW), 72-92 (ILVQ…YFFL), 101-121 (TLAC…ALIF), 132-152 (AGMG…LLTM), 181-201 (WIIG…WMLI), 213-233 (YSST…LSLI), 249-269 (IVTI…GTSW), 277-297 (IFTS…DFLI), and 302-322 (IFLG…IFLL). EamA domains lie at 25–144 (NALV…LICI) and 196–321 (GSWM…YIFL).

It belongs to the drug/metabolite transporter (DMT) superfamily. Plant drug/metabolite exporter (P-DME) (TC 2.A.7.4) family.

Its subcellular location is the membrane. In Arabidopsis thaliana (Mouse-ear cress), this protein is WAT1-related protein At4g01440.